Reading from the N-terminus, the 414-residue chain is CinA-like protein (414 aa).

The protein belongs to the CinA family.

The polypeptide is CinA-like protein (Citrifermentans bemidjiense (strain ATCC BAA-1014 / DSM 16622 / JCM 12645 / Bem) (Geobacter bemidjiensis)).